Reading from the N-terminus, the 152-residue chain is Proteolipid protein 2 (152 aa).

The 119-residue stretch at Phe19 to Gln137 folds into the MARVEL domain. 3 helical membrane passes run Gly25–Ser45, Gly48–Met68, and Phe85–Glu105. N-linked (GlcNAc...) asparagine glycosylation is present at Asn108. A helical membrane pass occupies residues Ile112–Thr132.

Its subcellular location is the membrane. In terms of biological role, may play a role in cell differentiation in the intestinal epithelium. In Bos taurus (Bovine), this protein is Proteolipid protein 2 (PLP2).